A 612-amino-acid chain; its full sequence is GPI mannosyltransferase 3 (612 aa).

The next 2 helical transmembrane spans lie at 92–112 (LLAIASKEALSIICSIGAGLM) and 145–165 (VIYAPKLFMALLAATGEYFTI). N-linked (GlcNAc...) asparagine glycosylation is present at Asn-188. The next 3 membrane-spanning stretches (helical) occupy residues 192–212 (IALLLTLTNFFNCFFITRTFI), 254–274 (RPSNAIIWIVLGFFLTINLLL), and 288–308 (ILVVFTITMLVNVVIDFYFYN). The N-linked (GlcNAc...) asparagine glycan is linked to Asn-321. Residues 339–359 (LLQSLPIMLGYSLPLFIYGLF) form a helical membrane-spanning segment. Asn-361 is a glycosylation site (N-linked (GlcNAc...) asparagine). The next 3 helical transmembrane spans lie at 371–391 (FGALRQIKFVLILNIIFYSYL), 398–418 (FIYPLQPLFCLLSALGALKLA), and 429–449 (EYVWIIPLMSMIVSIFITTFQ). Asn-508, Asn-526, and Asn-550 each carry an N-linked (GlcNAc...) asparagine glycan.

Belongs to the glycosyltransferase 22 family. PIGB subfamily.

The protein localises to the endoplasmic reticulum membrane. It participates in glycolipid biosynthesis; glycosylphosphatidylinositol-anchor biosynthesis. Mannosyltransferase involved in glycosylphosphatidylinositol-anchor biosynthesis. Transfers the third mannose to Man2-GlcN-acyl-PI during GPI precursor assembly. The polypeptide is GPI mannosyltransferase 3 (GPI10) (Candida glabrata (strain ATCC 2001 / BCRC 20586 / JCM 3761 / NBRC 0622 / NRRL Y-65 / CBS 138) (Yeast)).